A 156-amino-acid polypeptide reads, in one-letter code: ADKAASGVLTKLPQKQIQEMKEAFTMIDQNRDGFIDINDLKEMFSSLGRTPDDKELTAMLKEAPGPLNFTMFLSIFSDKLSGTDTEETLRNAFAMFDELDTKKLNIEYIKDLLENMGDNFTKDEMRMTFKEAPVTGGKFDYVKFTAMIKGSGEEEA.

Blocked amino end (Ala) is present on alanine 1. 2 consecutive EF-hand domains span residues 15–50 (KQIQ…LGRT) and 84–119 (DTEE…MGDN). Ca(2+)-binding residues include aspartate 28, asparagine 30, aspartate 32, and aspartate 39.

Functionally, in molluscan muscle, calcium regulation is associated with myosin rather than with actin. Muscle myosin contains two types of light chains: the catalytic light chain, essential for ATPase activity, and the regulatory light chain, a calcium-binding protein responsible for Ca(2+) dependent binding and Ca(2+) dependent Mg-ATPase activity. In Mizuhopecten yessoensis (Japanese scallop), this protein is Myosin regulatory light chain B, smooth adductor muscle.